Consider the following 251-residue polypeptide: Protein phosphatase 1 regulatory subunit 35 (251 aa).

Disordered regions lie at residues Leu-58 to His-99 and Pro-180 to Pro-235. Residues Pro-76 to His-99 show a composition bias toward basic and acidic residues.

It belongs to the PPP1R35 family.

The protein resides in the cytoplasm. The protein localises to the cytoskeleton. It is found in the microtubule organizing center. It localises to the centrosome. Its subcellular location is the centriole. Functionally, during centriole duplication, may play a role in the centriole elongation by promoting the recruitment of the microtubule-binding elongation machinery, leading to the centriole to centrosome conversion. In addition may play a role in the primary cilia assembly. The sequence is that of Protein phosphatase 1 regulatory subunit 35 from Danio rerio (Zebrafish).